Consider the following 592-residue polypeptide: uncharacterized protein (592 aa).

The first 23 residues, 1-23 (MRKAPLLRFTLASLALACSQAFA), serve as a signal peptide directing secretion. S37 (nucleophile) is an active-site residue. Catalysis depends on residues D294 and H297. Residues 334–592 (HQDELRNQWQ…PDPGEPGGKP (259 aa)) form the Autotransporter domain. The segment at 572-592 (FTLTGYTPHTAPDPGEPGGKP) is disordered.

This sequence belongs to the 'GDSL' lipolytic enzyme family.

This is an uncharacterized protein from Pseudomonas putida (Arthrobacter siderocapsulatus).